Reading from the N-terminus, the 291-residue chain is MSREITREELSAAGVQYGHQTKRWNPKMKSYIYGVKNKNHIIDLEKTITHLNAAQKLLEFLGSKQQKILFVGTKRSGKNAVKEAALRSGNFYINNRWLGGTLTNLKTILIRIKALWEIEEEEKKGRLSLRTKKEQIKILKEKAKLEKALGGIKQMHKLPAAIVVVDPKGDEIAVKEAKKLNIPVIAICDTNADPDMVDYVIPGNDDLQESVNLIINILVEAYAEGAQIKMNPSVLRTVAPKREPRQINRPVMSSENQAEQQTSVANENVQMTNEPVVQVAEVEKPSEPKAE.

Residues 241-270 (KREPRQINRPVMSSENQAEQQTSVANENVQ) are disordered. A compositionally biased stretch (polar residues) spans 251-270 (VMSSENQAEQQTSVANENVQ).

Belongs to the universal ribosomal protein uS2 family.

In Mycoplasma capricolum subsp. capricolum (strain California kid / ATCC 27343 / NCTC 10154), this protein is Small ribosomal subunit protein uS2.